The chain runs to 343 residues: Dihydroorotase (343 aa).

Residues His-14 and His-16 each contribute to the Zn(2+) site. Residues 16 to 18 (HLR) and Asn-42 each bind substrate. Residues Lys-97, His-136, His-170, and Asp-242 each contribute to the Zn(2+) site. Lys-97 carries the post-translational modification N6-carboxylysine. Residue His-136 participates in substrate binding. Residue Asp-242 is part of the active site. Substrate contacts are provided by His-246 and Ala-258.

It belongs to the metallo-dependent hydrolases superfamily. DHOase family. Class II DHOase subfamily. As to quaternary structure, homodimer. Zn(2+) serves as cofactor.

It catalyses the reaction (S)-dihydroorotate + H2O = N-carbamoyl-L-aspartate + H(+). It participates in pyrimidine metabolism; UMP biosynthesis via de novo pathway; (S)-dihydroorotate from bicarbonate: step 3/3. Its function is as follows. Catalyzes the reversible cyclization of carbamoyl aspartate to dihydroorotate. The chain is Dihydroorotase from Helicobacter hepaticus (strain ATCC 51449 / 3B1).